Consider the following 495-residue polypeptide: MQAILALDQGTTSSRAIVYDAHGGVLGTAQQDFPQYFPQPGWVEHDPGEIWQSQYRVMIQAVERAGIPWSAIAGLGLTNQRETTLLWDRATGEPLHRAIVWQDRRTARLCDDLRRDGHERLFRERTGLLLDPYFSGTKLRWLLDHVPGARRRAEAGELAFGTVDSWLIWQLTGGRLHLTDASNASRTLLCNIHSGDWDPDLLAALDIPAALLPEIIDSSGVCGTTCCAGVPEGIPIAGVAGDQQAALYGQGCHEAGLAKCTYGTGAFLLMHTGERPIASANRLLTTVAWRIGGRTAYALEGSVFIAGAVVQWLRDGLGLIRSSDEIEALARQVPDTGGVYLVPAFAGLGAPHWDPDARGILVGMTRGTERPHIARAALESMAFQATEVIGAMEVDAGLAVKELRVDGGASANDLLMQFQADLLGAPVLRPADTEATAAGAAALAARAVGLNGARPSAEAAFTAFSPRLSRYEVEQRMATWQRAVRRAGGWARDDD.

Thr-11 contributes to the ADP binding site. Residues Thr-11, Thr-12, and Ser-13 each coordinate ATP. A sn-glycerol 3-phosphate-binding site is contributed by Thr-11. Arg-15 is a binding site for ADP. Arg-81, Glu-82, Tyr-133, and Asp-242 together coordinate sn-glycerol 3-phosphate. Residues Arg-81, Glu-82, Tyr-133, Asp-242, and Gln-243 each coordinate glycerol. Residues Thr-264 and Gly-307 each coordinate ADP. ATP is bound by residues Thr-264, Gly-307, Gln-311, and Gly-408. ADP is bound by residues Gly-408 and Asn-412.

It belongs to the FGGY kinase family.

It catalyses the reaction glycerol + ATP = sn-glycerol 3-phosphate + ADP + H(+). The protein operates within polyol metabolism; glycerol degradation via glycerol kinase pathway; sn-glycerol 3-phosphate from glycerol: step 1/1. Its activity is regulated as follows. Inhibited by fructose 1,6-bisphosphate (FBP). Functionally, key enzyme in the regulation of glycerol uptake and metabolism. Catalyzes the phosphorylation of glycerol to yield sn-glycerol 3-phosphate. The protein is Glycerol kinase of Alkalilimnicola ehrlichii (strain ATCC BAA-1101 / DSM 17681 / MLHE-1).